A 1340-amino-acid polypeptide reads, in one-letter code: Early transcription factor large subunit homolog (1340 aa).

This sequence belongs to the asfivirus G1340L family.

Its subcellular location is the virion. Functionally, putative initation factor. The polypeptide is Early transcription factor large subunit homolog (African swine fever virus (strain Badajoz 1971 Vero-adapted) (Ba71V)).